Here is a 1517-residue protein sequence, read N- to C-terminus: DNA-directed RNA polymerase subunit beta' (1517 aa).

Zn(2+)-binding residues include Cys-71, Cys-73, Cys-86, and Cys-89. Mg(2+)-binding residues include Asp-482, Asp-484, and Asp-486. Zn(2+)-binding residues include Cys-812, Cys-886, Cys-893, and Cys-896.

It belongs to the RNA polymerase beta' chain family. As to quaternary structure, the RNAP catalytic core consists of 2 alpha, 1 beta, 1 beta' and 1 omega subunit. When a sigma factor is associated with the core the holoenzyme is formed, which can initiate transcription. Mg(2+) is required as a cofactor. It depends on Zn(2+) as a cofactor.

It catalyses the reaction RNA(n) + a ribonucleoside 5'-triphosphate = RNA(n+1) + diphosphate. Functionally, DNA-dependent RNA polymerase catalyzes the transcription of DNA into RNA using the four ribonucleoside triphosphates as substrates. This chain is DNA-directed RNA polymerase subunit beta', found in Campylobacter lari (strain RM2100 / D67 / ATCC BAA-1060).